We begin with the raw amino-acid sequence, 181 residues long: Adenine phosphoribosyltransferase (181 aa).

It belongs to the purine/pyrimidine phosphoribosyltransferase family. Homodimer.

It localises to the cytoplasm. It catalyses the reaction AMP + diphosphate = 5-phospho-alpha-D-ribose 1-diphosphate + adenine. It participates in purine metabolism; AMP biosynthesis via salvage pathway; AMP from adenine: step 1/1. Catalyzes a salvage reaction resulting in the formation of AMP, that is energically less costly than de novo synthesis. The sequence is that of Adenine phosphoribosyltransferase from Acidobacterium capsulatum (strain ATCC 51196 / DSM 11244 / BCRC 80197 / JCM 7670 / NBRC 15755 / NCIMB 13165 / 161).